The primary structure comprises 197 residues: Holliday junction branch migration complex subunit RuvA (197 aa).

The segment at 1 to 64 is domain I; sequence MIGRLSGKLI…EDAHLLYGFA (64 aa). The tract at residues 65–143 is domain II; that stretch reads SKEERQTFRQ…TGGNLTVPGG (79 aa). Residues 143–147 are flexible linker; the sequence is GLPFA. Residues 148-197 form a domain III region; it reads ATPDEKSDIVNALLALGYNEKEAAAATKSLPADVTVSEGVRLALKSLMKV.

Belongs to the RuvA family. In terms of assembly, homotetramer. Forms an RuvA(8)-RuvB(12)-Holliday junction (HJ) complex. HJ DNA is sandwiched between 2 RuvA tetramers; dsDNA enters through RuvA and exits via RuvB. An RuvB hexamer assembles on each DNA strand where it exits the tetramer. Each RuvB hexamer is contacted by two RuvA subunits (via domain III) on 2 adjacent RuvB subunits; this complex drives branch migration. In the full resolvosome a probable DNA-RuvA(4)-RuvB(12)-RuvC(2) complex forms which resolves the HJ.

It is found in the cytoplasm. Functionally, the RuvA-RuvB-RuvC complex processes Holliday junction (HJ) DNA during genetic recombination and DNA repair, while the RuvA-RuvB complex plays an important role in the rescue of blocked DNA replication forks via replication fork reversal (RFR). RuvA specifically binds to HJ cruciform DNA, conferring on it an open structure. The RuvB hexamer acts as an ATP-dependent pump, pulling dsDNA into and through the RuvAB complex. HJ branch migration allows RuvC to scan DNA until it finds its consensus sequence, where it cleaves and resolves the cruciform DNA. This is Holliday junction branch migration complex subunit RuvA from Chromobacterium violaceum (strain ATCC 12472 / DSM 30191 / JCM 1249 / CCUG 213 / NBRC 12614 / NCIMB 9131 / NCTC 9757 / MK).